Consider the following 574-residue polypeptide: Septation ring formation regulator EzrA (574 aa).

Over 1-7 (MPTGTII) the chain is Extracellular. A helical membrane pass occupies residues 8–26 (LIVSIVIILIIAYVACLIV). Topologically, residues 27-574 (RKRNDNLLVA…YEKTREAIRY (548 aa)) are cytoplasmic. Residues 105 to 189 (SAKNAIDSID…IEVEFSEFVM (85 aa)) adopt a coiled-coil conformation.

Belongs to the EzrA family.

The protein resides in the cell membrane. Functionally, negative regulator of FtsZ ring formation; modulates the frequency and position of FtsZ ring formation. Inhibits FtsZ ring formation at polar sites. Interacts either with FtsZ or with one of its binding partners to promote depolymerization. This chain is Septation ring formation regulator EzrA, found in Streptococcus suis (strain 98HAH33).